Reading from the N-terminus, the 88-residue chain is Large ribosomal subunit protein bL27 (88 aa).

Over residues 1–13 the composition is skewed to low complexity; that stretch reads MATKKSGGSSSNG. The interval 1–24 is disordered; that stretch reads MATKKSGGSSSNGRDSRGRRLGVK.

It belongs to the bacterial ribosomal protein bL27 family.

This Ehrlichia ruminantium (strain Gardel) protein is Large ribosomal subunit protein bL27.